A 661-amino-acid polypeptide reads, in one-letter code: DNA ligase (661 aa).

NAD(+)-binding positions include 31–35 (DSGYD), 80–81 (SL), and glutamate 109. Lysine 111 functions as the N6-AMP-lysine intermediate in the catalytic mechanism. Residues arginine 132, glutamate 167, lysine 283, and lysine 307 each coordinate NAD(+). Cysteine 401, cysteine 404, cysteine 419, and cysteine 424 together coordinate Zn(2+). One can recognise a BRCT domain in the interval 582 to 661 (AGEQLLQGKT…AGFLNLLGLS (80 aa)).

It belongs to the NAD-dependent DNA ligase family. LigA subfamily. Mg(2+) serves as cofactor. Mn(2+) is required as a cofactor.

It catalyses the reaction NAD(+) + (deoxyribonucleotide)n-3'-hydroxyl + 5'-phospho-(deoxyribonucleotide)m = (deoxyribonucleotide)n+m + AMP + beta-nicotinamide D-nucleotide.. Its function is as follows. DNA ligase that catalyzes the formation of phosphodiester linkages between 5'-phosphoryl and 3'-hydroxyl groups in double-stranded DNA using NAD as a coenzyme and as the energy source for the reaction. It is essential for DNA replication and repair of damaged DNA. The polypeptide is DNA ligase (Syntrophomonas wolfei subsp. wolfei (strain DSM 2245B / Goettingen)).